Reading from the N-terminus, the 232-residue chain is Ferric nitrobindin-like protein (232 aa).

Positions 1–10 (MSENETSKTG) are enriched in polar residues. The segment at 1–33 (MSENETSKTGGNAGVPGSGADAPSLSDSPAISG) is disordered. The short motif at 85 to 91 (GVWRGEG) is the GXWXGXG element.

It belongs to the nitrobindin family.

The polypeptide is Ferric nitrobindin-like protein (Corynebacterium efficiens (strain DSM 44549 / YS-314 / AJ 12310 / JCM 11189 / NBRC 100395)).